Here is a 236-residue protein sequence, read N- to C-terminus: EF-hand domain-containing protein D1 (236 aa).

A disordered region spans residues 1–48; that stretch reads MASEELASKLQRRLQWEEGDSGLQPAPGAAPDPEPQPQPPAWAPTARA. Residues 28-42 are compositionally biased toward pro residues; that stretch reads GAAPDPEPQPQPPAW. 2 EF-hand domains span residues 87–122 and 123–158; these read RLIK…LGAP and QTHL…AAAG. The Ca(2+) site is built by Asp-100, Asp-104, Glu-111, Asp-136, Asp-138, Asp-140, Lys-142, and Glu-147.

The protein resides in the mitochondrion inner membrane. Acts as a calcium sensor for mitochondrial flash (mitoflash) activation, an event characterized by stochastic bursts of superoxide production. May play a role in neuronal differentiation. This is EF-hand domain-containing protein D1 (EFHD1) from Bos taurus (Bovine).